We begin with the raw amino-acid sequence, 330 residues long: Beta-ketoacyl-[acyl-carrier-protein] synthase III (330 aa).

Residues C114 and H257 contribute to the active site. The interval 258-262 (QANLR) is ACP-binding. Residue N287 is part of the active site.

The protein belongs to the thiolase-like superfamily. FabH family. Homodimer.

It is found in the cytoplasm. It carries out the reaction malonyl-[ACP] + acetyl-CoA + H(+) = 3-oxobutanoyl-[ACP] + CO2 + CoA. The protein operates within lipid metabolism; fatty acid biosynthesis. Its function is as follows. Catalyzes the condensation reaction of fatty acid synthesis by the addition to an acyl acceptor of two carbons from malonyl-ACP. Catalyzes the first condensation reaction which initiates fatty acid synthesis and may therefore play a role in governing the total rate of fatty acid production. Possesses both acetoacetyl-ACP synthase and acetyl transacylase activities. Its substrate specificity determines the biosynthesis of branched-chain and/or straight-chain of fatty acids. The protein is Beta-ketoacyl-[acyl-carrier-protein] synthase III of Nitratidesulfovibrio vulgaris (strain ATCC 29579 / DSM 644 / CCUG 34227 / NCIMB 8303 / VKM B-1760 / Hildenborough) (Desulfovibrio vulgaris).